The sequence spans 855 residues: DNA mismatch repair protein MutS (855 aa).

616–623 (GPNMGGKS) contributes to the ATP binding site.

Belongs to the DNA mismatch repair MutS family.

In terms of biological role, this protein is involved in the repair of mismatches in DNA. It is possible that it carries out the mismatch recognition step. This protein has a weak ATPase activity. The chain is DNA mismatch repair protein MutS from Salmonella gallinarum (strain 287/91 / NCTC 13346).